The chain runs to 157 residues: Endoribonuclease YbeY (157 aa).

His-116, His-120, and His-126 together coordinate Zn(2+).

This sequence belongs to the endoribonuclease YbeY family. Zn(2+) is required as a cofactor.

It localises to the cytoplasm. In terms of biological role, single strand-specific metallo-endoribonuclease involved in late-stage 70S ribosome quality control and in maturation of the 3' terminus of the 16S rRNA. The protein is Endoribonuclease YbeY of Blochmanniella pennsylvanica (strain BPEN).